Consider the following 115-residue polypeptide: Fluoride-specific ion channel FluC 4 (115 aa).

The next 2 helical transmembrane spans lie at Trp19–Gly39 and Leu42–Gly62. Gly61 and Thr64 together coordinate Na(+). A helical transmembrane segment spans residues Ile89–Trp109.

This sequence belongs to the fluoride channel Fluc/FEX (TC 1.A.43) family.

It is found in the cell inner membrane. It carries out the reaction fluoride(in) = fluoride(out). Its activity is regulated as follows. Na(+) is not transported, but it plays an essential structural role and its presence is essential for fluoride channel function. In terms of biological role, fluoride-specific ion channel. Important for reducing fluoride concentration in the cell, thus reducing its toxicity. The chain is Fluoride-specific ion channel FluC 4 from Brucella melitensis biotype 1 (strain ATCC 23456 / CCUG 17765 / NCTC 10094 / 16M).